The primary structure comprises 428 residues: tRNA modification GTPase MnmE (428 aa).

The (6S)-5-formyl-5,6,7,8-tetrahydrofolate site is built by Arg-20, Glu-77, and Lys-117. In terms of domain architecture, TrmE-type G spans 213–351; sequence GFEVAIIGPP…LVQRISDVLK (139 aa). Asn-223 provides a ligand contact to K(+). GTP-binding positions include 223–228, 242–248, and 267–270; these read NAGKST, SEVAGTT, and DTAG. Ser-227 contributes to the Mg(2+) binding site. Ser-242, Val-244, and Thr-247 together coordinate K(+). Thr-248 lines the Mg(2+) pocket. Lys-428 contacts (6S)-5-formyl-5,6,7,8-tetrahydrofolate.

This sequence belongs to the TRAFAC class TrmE-Era-EngA-EngB-Septin-like GTPase superfamily. TrmE GTPase family. As to quaternary structure, homodimer. Heterotetramer of two MnmE and two MnmG subunits. The cofactor is K(+).

Its subcellular location is the cytoplasm. Functionally, exhibits a very high intrinsic GTPase hydrolysis rate. Involved in the addition of a carboxymethylaminomethyl (cmnm) group at the wobble position (U34) of certain tRNAs, forming tRNA-cmnm(5)s(2)U34. The chain is tRNA modification GTPase MnmE from Ruegeria pomeroyi (strain ATCC 700808 / DSM 15171 / DSS-3) (Silicibacter pomeroyi).